The following is a 777-amino-acid chain: Aconitate hydratase, mitochondrial (777 aa).

Residues Q96 and 189 to 191 (DSH) each bind substrate. Positions 383, 446, and 449 each coordinate [4Fe-4S] cluster. Substrate-binding positions include R472, R477, R605, and 668–669 (SR).

The protein belongs to the aconitase/IPM isomerase family. In terms of assembly, monomer. The cofactor is [4Fe-4S] cluster.

The protein resides in the mitochondrion. It carries out the reaction citrate = D-threo-isocitrate. The protein operates within carbohydrate metabolism; tricarboxylic acid cycle; isocitrate from oxaloacetate: step 2/2. In terms of biological role, catalyzes the isomerization of citrate to isocitrate via cis-aconitate, a step in the citric acid cycle. This chain is Aconitate hydratase, mitochondrial (ACO1), found in Candida albicans (strain SC5314 / ATCC MYA-2876) (Yeast).